Reading from the N-terminus, the 711-residue chain is Polyribonucleotide nucleotidyltransferase (711 aa).

Residues aspartate 486 and aspartate 492 each contribute to the Mg(2+) site. One can recognise a KH domain in the interval 553–612; sequence PRIHTIKINPDKIKDVIGKGGSVIRALTEETGTTIEIEDDGTVKIAATDGEKAKHAIRRI. The S1 motif domain occupies 622 to 690; that stretch reads GRVYNGKVTR…RQGRIRLSIK (69 aa). Residues 689 to 711 are disordered; the sequence is IKEATEQSQPAAAPEAPAAEQGE. Positions 694-711 are enriched in low complexity; that stretch reads EQSQPAAAPEAPAAEQGE.

It belongs to the polyribonucleotide nucleotidyltransferase family. Component of the RNA degradosome, which is a multiprotein complex involved in RNA processing and mRNA degradation. The cofactor is Mg(2+).

The protein localises to the cytoplasm. The catalysed reaction is RNA(n+1) + phosphate = RNA(n) + a ribonucleoside 5'-diphosphate. Functionally, involved in mRNA degradation. Catalyzes the phosphorolysis of single-stranded polyribonucleotides processively in the 3'- to 5'-direction. The chain is Polyribonucleotide nucleotidyltransferase from Escherichia coli O6:K15:H31 (strain 536 / UPEC).